Consider the following 142-residue polypeptide: Deoxyuridine 5'-triphosphate nucleotidohydrolase (142 aa).

Substrate contacts are provided by residues 62–64 (RSG), N75, and 79–81 (TID).

Belongs to the dUTPase family. Mg(2+) serves as cofactor.

It catalyses the reaction dUTP + H2O = dUMP + diphosphate + H(+). The protein operates within pyrimidine metabolism; dUMP biosynthesis; dUMP from dCTP (dUTP route): step 2/2. Its function is as follows. This enzyme is involved in nucleotide metabolism: it produces dUMP, the immediate precursor of thymidine nucleotides and it decreases the intracellular concentration of dUTP so that uracil cannot be incorporated into DNA. This chain is Deoxyuridine 5'-triphosphate nucleotidohydrolase, found in Picosynechococcus sp. (strain ATCC 27264 / PCC 7002 / PR-6) (Agmenellum quadruplicatum).